The primary structure comprises 580 residues: Arginine--tRNA ligase (580 aa).

The 'HIGH' region signature appears at 131–141 (ANPTGPLHVGH).

It belongs to the class-I aminoacyl-tRNA synthetase family. In terms of assembly, monomer.

It localises to the cytoplasm. It catalyses the reaction tRNA(Arg) + L-arginine + ATP = L-arginyl-tRNA(Arg) + AMP + diphosphate. This Roseobacter denitrificans (strain ATCC 33942 / OCh 114) (Erythrobacter sp. (strain OCh 114)) protein is Arginine--tRNA ligase.